Here is a 466-residue protein sequence, read N- to C-terminus: Argininosuccinate lyase (466 aa).

This sequence belongs to the lyase 1 family. Argininosuccinate lyase subfamily.

The protein localises to the cytoplasm. The catalysed reaction is 2-(N(omega)-L-arginino)succinate = fumarate + L-arginine. Its pathway is amino-acid biosynthesis; L-arginine biosynthesis; L-arginine from L-ornithine and carbamoyl phosphate: step 3/3. The sequence is that of Argininosuccinate lyase from Bartonella tribocorum (strain CIP 105476 / IBS 506).